Here is a 458-residue protein sequence, read N- to C-terminus: MKPVVVILGRPNVGKSTLFNRLTRTQNALVDDMPGVTRDRLYGDVEWNGVFFSLVDTGGFLSGDDDFFMPHIQSQIHRAIDEADAVLLVFDGKSGISPFDREAMAFLQSASCPVFYLVNKIDSPEREVYTAEFFGLGLDNLYPVSGAHGYGVTDFLDDLVNALPETEPEPPADDMIKLAVVGRPNVGKSTLINRILGQERMIVSDVPGTTRESVDTVCEIDGRSYLLIDTAGLRRKSRVSVKLEKFSAIKTLKSLDRCDIALILVDAEEGVTDQDVTIAGYAFERGCGCIFLVNKWDLAKEQEKKAKTFYDDLQDQAKFLSFAPAVTISAATGFRVKKIFELIDAVHAQYTFNIKTGELNNIFERATRSKEPPFHKGRRLKFNYAVQVATGPPTFICFVNFPSGVHFSYKRYLINAIRRETGLDKTPIRLFFREKPGRIDFAALKPSEKRGGKKTRRK.

EngA-type G domains are found at residues 3–167 and 176–351; these read PVVV…PETE and IKLA…AQYT. Residues 9–16, 56–60, 119–122, 182–189, 229–233, and 294–297 each bind GTP; these read GRPNVGKS, DTGGF, NKID, DTAGL, and NKWD. Positions 352 to 436 constitute a KH-like domain; sequence FNIKTGELNN…PIRLFFREKP (85 aa).

The protein belongs to the TRAFAC class TrmE-Era-EngA-EngB-Septin-like GTPase superfamily. EngA (Der) GTPase family. As to quaternary structure, associates with the 50S ribosomal subunit.

In terms of biological role, GTPase that plays an essential role in the late steps of ribosome biogenesis. The protein is GTPase Der of Desulfosudis oleivorans (strain DSM 6200 / JCM 39069 / Hxd3) (Desulfococcus oleovorans).